We begin with the raw amino-acid sequence, 505 residues long: Glycerol kinase (505 aa).

Thr14 is an ADP binding site. The ATP site is built by Thr14, Thr15, and Ser16. Thr14 lines the sn-glycerol 3-phosphate pocket. Arg18 provides a ligand contact to ADP. Sn-glycerol 3-phosphate-binding residues include Arg84, Glu85, Tyr136, and Asp246. The glycerol site is built by Arg84, Glu85, Tyr136, Asp246, and Gln247. ADP-binding residues include Thr268 and Gly311. ATP contacts are provided by Thr268, Gly311, Gln315, and Gly412. Residues Gly412 and Asn416 each coordinate ADP.

It belongs to the FGGY kinase family.

It catalyses the reaction glycerol + ATP = sn-glycerol 3-phosphate + ADP + H(+). It participates in polyol metabolism; glycerol degradation via glycerol kinase pathway; sn-glycerol 3-phosphate from glycerol: step 1/1. With respect to regulation, inhibited by fructose 1,6-bisphosphate (FBP). Its function is as follows. Key enzyme in the regulation of glycerol uptake and metabolism. Catalyzes the phosphorylation of glycerol to yield sn-glycerol 3-phosphate. The protein is Glycerol kinase of Vibrio cholerae serotype O1 (strain M66-2).